The chain runs to 142 residues: MTEDIEQKKTATEVTPQEPKHIQEEEEQDVDMTGDEEQEEEPDREKIKLLTQATSEDGTSASFQIVEEDHTLGNALRYVIMKNPDVEFCGYSIPHPSENLLNIRIQTYGETTAVDALQKGLKDLMDLCDVVESKFTEKIKSM.

Positions 1 to 11 (MTEDIEQKKTA) are enriched in basic and acidic residues. Residues 1-45 (MTEDIEQKKTATEVTPQEPKHIQEEEEQDVDMTGDEEQEEEPDRE) form a disordered region. Phosphothreonine is present on residues T15 and T33. A compositionally biased stretch (acidic residues) spans 24–42 (EEEEQDVDMTGDEEQEEEP). K134 participates in a covalent cross-link: Glycyl lysine isopeptide (Lys-Gly) (interchain with G-Cter in ubiquitin).

This sequence belongs to the archaeal Rpo11/eukaryotic RPB11/RPC19 RNA polymerase subunit family. In terms of assembly, component of the RNA polymerase I (Pol I) and RNA polymerase III (Pol III) complexes. Component of the RNA polymerase I (Pol I) complex consisting of 14 subunits: RPA135, RPA190, RPC40, RPA14, RPB5, RPO26, RPA43, RPB8, RPA12, RPB10, RPC19, RPC10, RPA49 and RPA34. The complex is composed of a horseshoe-shaped core containing ten subunits (RPA135, RPA190, RPB5, RPO26, RPB8, RPB10, RPC10, RPA12, RPC19 and RPC40) where RPA135 and RPA190 form the DNA-binding cleft. Outside of the core, RPA14 and RPA43 form the stalk that mediates interactions with transcription initiation factors and newly synthesized RNA. Component of the RNA polymerase III (Pol III) complex consisting of 17 subunits. Directly interacts with the RPC40 subunit.

Its subcellular location is the nucleus. It localises to the nucleolus. DNA-dependent RNA polymerases catalyze the transcription of DNA into RNA using the four ribonucleoside triphosphates as substrates. Common core component of RNA polymerases I and III which synthesize ribosomal RNA precursors and small RNAs, such as 5S rRNA and tRNAs, respectively. This is DNA-directed RNA polymerases I and III subunit RPAC2 (RPC19) from Saccharomyces cerevisiae (strain ATCC 204508 / S288c) (Baker's yeast).